Here is a 329-residue protein sequence, read N- to C-terminus: Glyceraldehyde-3-phosphate dehydrogenase 1 (329 aa).

NAD(+) is bound by residues 11-12 (RI), Asp33, and Lys78. D-glyceraldehyde 3-phosphate is bound by residues 148–150 (SCT), Thr179, 208–209 (TG), and Arg231. The active-site Nucleophile is the Cys149. Position 313 (Asn313) interacts with NAD(+).

This sequence belongs to the glyceraldehyde-3-phosphate dehydrogenase family. As to quaternary structure, homotetramer.

It is found in the cytoplasm. It carries out the reaction D-glyceraldehyde 3-phosphate + phosphate + NAD(+) = (2R)-3-phospho-glyceroyl phosphate + NADH + H(+). It participates in carbohydrate degradation; glycolysis; pyruvate from D-glyceraldehyde 3-phosphate: step 1/5. The sequence is that of Glyceraldehyde-3-phosphate dehydrogenase 1 (GAP1) from Kluyveromyces lactis (strain ATCC 8585 / CBS 2359 / DSM 70799 / NBRC 1267 / NRRL Y-1140 / WM37) (Yeast).